The primary structure comprises 160 residues: UPF0225 protein PP_1119 (160 aa).

It belongs to the UPF0225 family.

The sequence is that of UPF0225 protein PP_1119 from Pseudomonas putida (strain ATCC 47054 / DSM 6125 / CFBP 8728 / NCIMB 11950 / KT2440).